The primary structure comprises 745 residues: Exocyst complex component 3 (745 aa).

At K28 the chain carries N6-acetyllysine.

This sequence belongs to the SEC6 family. In terms of assembly, the exocyst complex is composed of EXOC1, EXOC2, EXOC3, EXOC4, EXOC5, EXOC6, EXOC7 and EXOC8. Interacts with EXOC3L1. Interacts with BIRC6/bruce. Interacts with MYRIP. Interacts with SLC6A9.

The protein resides in the cytoplasm. It localises to the perinuclear region. Its subcellular location is the cell projection. The protein localises to the growth cone. It is found in the neuron projection. The protein resides in the midbody. It localises to the golgi apparatus. Functionally, component of the exocyst complex involved in the docking of exocytic vesicles with fusion sites on the plasma membrane. This chain is Exocyst complex component 3 (EXOC3), found in Bos taurus (Bovine).